The primary structure comprises 133 residues: Large ribosomal subunit protein bL20 (133 aa).

Belongs to the bacterial ribosomal protein bL20 family.

In terms of biological role, binds directly to 23S ribosomal RNA and is necessary for the in vitro assembly process of the 50S ribosomal subunit. It is not involved in the protein synthesizing functions of that subunit. The polypeptide is Large ribosomal subunit protein bL20 (Mesorhizobium japonicum (strain LMG 29417 / CECT 9101 / MAFF 303099) (Mesorhizobium loti (strain MAFF 303099))).